The chain runs to 372 residues: Bifunctional coenzyme PQQ synthesis protein C/D (372 aa).

Residues 1 to 267 form a pqqC region; sequence MTAQFPPPVP…VAETNSAEDS (267 aa). The interval 260-288 is disordered; it reads ETNSAEDSPAAAASPAATTAEPTAFSGSD. The segment covering 264–283 has biased composition (low complexity); it reads AEDSPAAAASPAATTAEPTA. Residues 268 to 280 are linker; the sequence is PAAAASPAATTAE. A pqqD region spans residues 281-372; it reads PTAFSGSDVP…GLAQKRVLER (92 aa).

This sequence in the N-terminal section; belongs to the PqqC family. The protein in the C-terminal section; belongs to the PqqD family. As to quaternary structure, monomer. Interacts with PqqE.

The catalysed reaction is 6-(2-amino-2-carboxyethyl)-7,8-dioxo-1,2,3,4,7,8-hexahydroquinoline-2,4-dicarboxylate + 3 O2 = pyrroloquinoline quinone + 2 H2O2 + 2 H2O + H(+). Its pathway is cofactor biosynthesis; pyrroloquinoline quinone biosynthesis. Its function is as follows. The PqqC region is involved in ring cyclization and eight-electron oxidation of 3a-(2-amino-2-carboxyethyl)-4,5-dioxo-4,5,6,7,8,9-hexahydroquinoline-7,9-dicarboxylic-acid to PQQ. The PqqD region functions as a PqqA binding domain and presents PqqA to PqqE. The chain is Bifunctional coenzyme PQQ synthesis protein C/D (pqqCD) from Methylorubrum extorquens (strain ATCC 14718 / DSM 1338 / JCM 2805 / NCIMB 9133 / AM1) (Methylobacterium extorquens).